The sequence spans 280 residues: S-methyl-5'-thioadenosine phosphorylase (280 aa).

Residues Ser18, 60–61 (RH), and 93–94 (TA) each bind phosphate. Met196 is a binding site for substrate. A phosphate-binding site is contributed by Thr197. 220–222 (DYD) lines the substrate pocket.

Belongs to the PNP/MTAP phosphorylase family. MTAP subfamily. Homotrimer.

Its subcellular location is the cytoplasm. The protein localises to the nucleus. The catalysed reaction is S-methyl-5'-thioadenosine + phosphate = 5-(methylsulfanyl)-alpha-D-ribose 1-phosphate + adenine. Its pathway is amino-acid biosynthesis; L-methionine biosynthesis via salvage pathway; S-methyl-5-thio-alpha-D-ribose 1-phosphate from S-methyl-5'-thioadenosine (phosphorylase route): step 1/1. In terms of biological role, catalyzes the reversible phosphorylation of S-methyl-5'-thioadenosine (MTA) to adenine and 5-methylthioribose-1-phosphate. Involved in the breakdown of MTA, a major by-product of polyamine biosynthesis. Responsible for the first step in the methionine salvage pathway after MTA has been generated from S-adenosylmethionine. Has broad substrate specificity with 6-aminopurine nucleosides as preferred substrates. This is S-methyl-5'-thioadenosine phosphorylase from Ciona intestinalis (Transparent sea squirt).